The chain runs to 94 residues: Pyrimidine/purine nucleoside phosphorylase (94 aa).

Belongs to the nucleoside phosphorylase PpnP family.

The enzyme catalyses a purine D-ribonucleoside + phosphate = a purine nucleobase + alpha-D-ribose 1-phosphate. The catalysed reaction is adenosine + phosphate = alpha-D-ribose 1-phosphate + adenine. It catalyses the reaction cytidine + phosphate = cytosine + alpha-D-ribose 1-phosphate. It carries out the reaction guanosine + phosphate = alpha-D-ribose 1-phosphate + guanine. The enzyme catalyses inosine + phosphate = alpha-D-ribose 1-phosphate + hypoxanthine. The catalysed reaction is thymidine + phosphate = 2-deoxy-alpha-D-ribose 1-phosphate + thymine. It catalyses the reaction uridine + phosphate = alpha-D-ribose 1-phosphate + uracil. It carries out the reaction xanthosine + phosphate = alpha-D-ribose 1-phosphate + xanthine. Catalyzes the phosphorolysis of diverse nucleosides, yielding D-ribose 1-phosphate and the respective free bases. Can use uridine, adenosine, guanosine, cytidine, thymidine, inosine and xanthosine as substrates. Also catalyzes the reverse reactions. This chain is Pyrimidine/purine nucleoside phosphorylase, found in Pectobacterium atrosepticum (strain SCRI 1043 / ATCC BAA-672) (Erwinia carotovora subsp. atroseptica).